Reading from the N-terminus, the 938-residue chain is MILGPGGRIFINHGHPAYPHLMDFLTACCEPVCRTLYVSEYTISPSSLSAATAEGTYSMEMVRNVIRYFRLDEQQQIPVDVERYAALERRVRDSVQDTSLDLPMEVGEAKVSANGDVKAEEGCEEATDELSPLAGQVKKEETKEVAAEPRRRFLSLSKRISAKSEPLVTRAVVNTGALQPLPADLEQMLREEENSSRVRIVLQPCLRPVKRRAVGGDKQHSDEQQCQRAEETKLAYFLTSPDRNHMEHLVSRLQDFLVPVLLHGTRRWVVSDVDRGVEERSTAESGRAKTLRRLFEAPSSASGRSVASKSLTNEGANGDGLGGGVGRRCTRIVYKSQVMDGKMRNVRERLYKELSVRADLFYDYVQDHSLHVCDLELSENVRLRPYQVASLERFRSGNKAHQGVIVLPCGAGKTLTGIGAAATVKKRTIVMCINVMSVLQWQREFIRWTNLSEDQVTVCIADKKQMPGDVFITTYSMLIARRSNVPEMEQSADAKLTAKILASVGEQPWGLLLLDEVHTALAHNFQEVLNKVKYKCVIGLSATLLREDDKIGDLRHLVGPKLYEANWLDLTRAGFLARVECAEIQCPLPKAFLTEYLESQSDGDPFARRGTTRMAHSVVCLNPYKLWCTQALLEFHRNRSPPDKVIIFCDQIDGIQYYAQHLHVPFMDGKTSDMERENLLQYFQHSDNINAIILSRVGDVALDIPCASVVIQISGLGASRRQEAQRLGRILRPKPASLDNVCSYFYTLVSQDTHEISQSYERQSWLRDQGFSYRVLQSDMVLQHFLRTGGKLCCVGPPRWWYECAGPSCDSAVAAKGTYWIPFSQEAALRMQSRFVAGVRGCDLTATVLRDTPRPPELKNMGVEEKWTVCFSDSCAPETFGTVQLVEGNPLLVRRICCGPLAVEHDCLHGGEECLQYAVQQMKVMVAKNSKNRIPLTT.

In terms of domain architecture, Helicase ATP-binding spans 394–562; it reads FRSGNKAHQG…DLRHLVGPKL (169 aa). Position 407 to 414 (407 to 414) interacts with ATP; sequence LPCGAGKT. Residues 515 to 518 carry the DEVH box motif; that stretch reads DEVH. Residues 627 to 781 form the Helicase C-terminal domain; the sequence is WCTQALLEFH…SYRVLQSDMV (155 aa).

Belongs to the helicase family. RAD25/XPB subfamily. Component of the 7-subunit TFIIH core complex composed of XPB, XPD, SSL1, TFB1, TFB2, TFB4 and TFB5.

It carries out the reaction Couples ATP hydrolysis with the unwinding of duplex DNA by translocating in the 3'-5' direction.. It catalyses the reaction ATP + H2O = ADP + phosphate + H(+). In terms of biological role, ATP-dependent 3'-5' DNA helicase/translocase; binds dsDNA rather than ssDNA, unzipping it in a translocase rather than classical helicase activity. Component of the general transcription factor IIH (TFIIH) core complex, involved in spliced leader RNA (SL RNA) gene transcription by RNA polymerase II. TFIIH has an essential role in transcription initiation. When the pre-initiation complex (PIC) has been established, TFIIH is required for promoter opening and promoter escape. The ATPase activity of XPB is required for promoter opening and promoter escape. This chain is TFIIH basal transcription factor complex helicase/translocase XPB subunit, found in Trypanosoma brucei brucei (strain 927/4 GUTat10.1).